We begin with the raw amino-acid sequence, 922 residues long: Coronin-7 (922 aa).

WD repeat units lie at residues 75–115, 124–163, 166–205, and 209–253; these read CHSD…EALP, PEEL…HLTE, AHKD…QASQ, and AHEN…SALA. A disordered region spans residues 386-462; it reads NPAHRPHPRF…TSPSQRSLQS (77 aa). Low complexity predominate over residues 423 to 456; that stretch reads SEGFSSPSSLVSPSTPSSLGLSLSSTSGIGTSPS. 2 positions are modified to phosphoserine: Ser459 and Ser462. Residue Lys469 forms a Glycyl lysine isopeptide (Lys-Gly) (interchain with G-Cter in ubiquitin) linkage. WD repeat units follow at residues 539 to 579, 589 to 629, 632 to 671, and 725 to 765; these read QNGA…LKNV, GHTE…EQLR, GHQD…LPLQ, and DVAP…PFFL. The segment at 854-922 is disordered; the sequence is LQPPGMTPVS…FEGVDEDEWD (69 aa). Thr874 bears the Phosphothreonine mark. Positions 881–893 are enriched in basic and acidic residues; sequence LEEKSDQQKKEEL. A Phosphoserine modification is found at Ser912.

It belongs to the WD repeat coronin family. Interacts with clathrin adapter AP1 complex. This interaction takes place at Golgi membranes and not AP1-positive endosomal membranes. Interacts (when ubiquitinated at Lys-469) with EPS15. In terms of processing, the membrane-associated form is phosphorylated on tyrosine residues. Ubiquitinated via 'Lys-33'-linked ubiquitin chains by the BCR(KLHL20) E3 ubiquitin ligase complex: 'Lys-33'-linked ubiquitination promotes interaction with EPS15 and facilitates actin polymerization at the trans-Golgi network, thereby facilitating post-Golgi trafficking. Deubiquitinated by ZRANB1/TRABID.

Its subcellular location is the golgi apparatus membrane. It is found in the golgi apparatus. The protein resides in the trans-Golgi network. The protein localises to the cytoplasmic vesicle. It localises to the cytoplasm. Its subcellular location is the cytosol. In terms of biological role, F-actin regulator involved in anterograde Golgi to endosome transport: upon ubiquitination via 'Lys-33'-linked ubiquitin chains by the BCR(KLHL20) E3 ubiquitin ligase complex, interacts with EPS15 and localizes to the trans-Golgi network, where it promotes actin polymerization, thereby facilitating post-Golgi trafficking. May play a role in the maintenance of the Golgi apparatus morphology. The protein is Coronin-7 (Coro7) of Rattus norvegicus (Rat).